Here is a 259-residue protein sequence, read N- to C-terminus: Thiazole synthase (259 aa).

The active-site Schiff-base intermediate with DXP is the Lys95. Residues Gly156, 182–183 (AG), and 204–205 (AS) each bind 1-deoxy-D-xylulose 5-phosphate.

It belongs to the ThiG family. Homotetramer. Forms heterodimers with either ThiH or ThiS.

The protein resides in the cytoplasm. The enzyme catalyses [ThiS sulfur-carrier protein]-C-terminal-Gly-aminoethanethioate + 2-iminoacetate + 1-deoxy-D-xylulose 5-phosphate = [ThiS sulfur-carrier protein]-C-terminal Gly-Gly + 2-[(2R,5Z)-2-carboxy-4-methylthiazol-5(2H)-ylidene]ethyl phosphate + 2 H2O + H(+). The protein operates within cofactor biosynthesis; thiamine diphosphate biosynthesis. Catalyzes the rearrangement of 1-deoxy-D-xylulose 5-phosphate (DXP) to produce the thiazole phosphate moiety of thiamine. Sulfur is provided by the thiocarboxylate moiety of the carrier protein ThiS. In vitro, sulfur can be provided by H(2)S. The sequence is that of Thiazole synthase from Corynebacterium efficiens (strain DSM 44549 / YS-314 / AJ 12310 / JCM 11189 / NBRC 100395).